The primary structure comprises 1043 residues: Unconventional myosin-Ia (1043 aa).

Residues 8 to 694 form the Myosin motor domain; it reads VGVEDLVLLE…TLFYLEEQRR (687 aa). 101 to 108 contacts ATP; it reads GESGSGKT. The tract at residues 571 to 593 is actin-binding; it reads VAILMKNLYSKSPNYIRCIKPNE. 3 IQ domains span residues 697 to 719, 720 to 742, and 743 to 772; these read LQQL…HYQL, MRKS…CYGK, and IKAS…SEAA. The region spanning 858 to 1042 is the TH1 domain; sequence KASYPQSVPI…KGSHCLEVTV (185 aa).

The protein belongs to the TRAFAC class myosin-kinesin ATPase superfamily. Myosin family. Phosphorylated by ALPK1.

In terms of biological role, involved in directing the movement of organelles along actin filaments. This is Unconventional myosin-Ia (MYO1A) from Homo sapiens (Human).